A 142-amino-acid polypeptide reads, in one-letter code: FAD synthase (142 aa).

ATP contacts are provided by residues Thr-9–Phe-10, His-14–His-17, Asp-92, and Tyr-119.

The protein belongs to the archaeal FAD synthase family. In terms of assembly, homodimer. It depends on a divalent metal cation as a cofactor.

It carries out the reaction FMN + ATP + H(+) = FAD + diphosphate. Its pathway is cofactor biosynthesis; FAD biosynthesis; FAD from FMN: step 1/1. Catalyzes the transfer of the AMP portion of ATP to flavin mononucleotide (FMN) to produce flavin adenine dinucleotide (FAD) coenzyme. The polypeptide is FAD synthase (Halorhabdus utahensis (strain DSM 12940 / JCM 11049 / AX-2)).